A 431-amino-acid chain; its full sequence is Enolase (431 aa).

Gln167 lines the (2R)-2-phosphoglycerate pocket. Catalysis depends on Glu209, which acts as the Proton donor. Asp246, Glu290, and Asp317 together coordinate Mg(2+). Positions 342, 371, 372, and 393 each coordinate (2R)-2-phosphoglycerate. Lys342 (proton acceptor) is an active-site residue.

This sequence belongs to the enolase family. As to quaternary structure, component of the RNA degradosome, a multiprotein complex involved in RNA processing and mRNA degradation. Requires Mg(2+) as cofactor.

It localises to the cytoplasm. The protein resides in the secreted. It is found in the cell surface. It carries out the reaction (2R)-2-phosphoglycerate = phosphoenolpyruvate + H2O. It participates in carbohydrate degradation; glycolysis; pyruvate from D-glyceraldehyde 3-phosphate: step 4/5. Functionally, catalyzes the reversible conversion of 2-phosphoglycerate (2-PG) into phosphoenolpyruvate (PEP). It is essential for the degradation of carbohydrates via glycolysis. In Yersinia pestis bv. Antiqua (strain Antiqua), this protein is Enolase.